The chain runs to 605 residues: Elongation factor 4 (605 aa).

Residues 9-192 form the tr-type G domain; the sequence is SRIRNFCIIA…AIIARVPAPA (184 aa). GTP is bound by residues 21–26 and 139–142; these read DHGKST and NKID.

It belongs to the TRAFAC class translation factor GTPase superfamily. Classic translation factor GTPase family. LepA subfamily.

Its subcellular location is the cell inner membrane. It carries out the reaction GTP + H2O = GDP + phosphate + H(+). In terms of biological role, required for accurate and efficient protein synthesis under certain stress conditions. May act as a fidelity factor of the translation reaction, by catalyzing a one-codon backward translocation of tRNAs on improperly translocated ribosomes. Back-translocation proceeds from a post-translocation (POST) complex to a pre-translocation (PRE) complex, thus giving elongation factor G a second chance to translocate the tRNAs correctly. Binds to ribosomes in a GTP-dependent manner. In Chlorobium luteolum (strain DSM 273 / BCRC 81028 / 2530) (Pelodictyon luteolum), this protein is Elongation factor 4.